The following is a 158-amino-acid chain: 6,7-dimethyl-8-ribityllumazine synthase (158 aa).

5-amino-6-(D-ribitylamino)uracil contacts are provided by residues F22, 57-59, and 81-83; these read AVE and AVI. 86 to 87 is a (2S)-2-hydroxy-3-oxobutyl phosphate binding site; that stretch reads GT. The active-site Proton donor is H89. Position 114 (F114) interacts with 5-amino-6-(D-ribitylamino)uracil. A (2S)-2-hydroxy-3-oxobutyl phosphate-binding site is contributed by R128.

The protein belongs to the DMRL synthase family. Forms an icosahedral capsid composed of 60 subunits, arranged as a dodecamer of pentamers.

The catalysed reaction is (2S)-2-hydroxy-3-oxobutyl phosphate + 5-amino-6-(D-ribitylamino)uracil = 6,7-dimethyl-8-(1-D-ribityl)lumazine + phosphate + 2 H2O + H(+). The protein operates within cofactor biosynthesis; riboflavin biosynthesis; riboflavin from 2-hydroxy-3-oxobutyl phosphate and 5-amino-6-(D-ribitylamino)uracil: step 1/2. Its function is as follows. Catalyzes the formation of 6,7-dimethyl-8-ribityllumazine by condensation of 5-amino-6-(D-ribitylamino)uracil with 3,4-dihydroxy-2-butanone 4-phosphate. This is the penultimate step in the biosynthesis of riboflavin. The chain is 6,7-dimethyl-8-ribityllumazine synthase from Shewanella pealeana (strain ATCC 700345 / ANG-SQ1).